A 432-amino-acid polypeptide reads, in one-letter code: Serine hydroxymethyltransferase (432 aa).

Residues Leu127 and 131-133 (GHL) each bind (6S)-5,6,7,8-tetrahydrofolate. Lys236 carries the N6-(pyridoxal phosphate)lysine modification.

The protein belongs to the SHMT family. Homodimer. Pyridoxal 5'-phosphate serves as cofactor.

The protein localises to the cytoplasm. The catalysed reaction is (6R)-5,10-methylene-5,6,7,8-tetrahydrofolate + glycine + H2O = (6S)-5,6,7,8-tetrahydrofolate + L-serine. It participates in one-carbon metabolism; tetrahydrofolate interconversion. It functions in the pathway amino-acid biosynthesis; glycine biosynthesis; glycine from L-serine: step 1/1. Functionally, catalyzes the reversible interconversion of serine and glycine with tetrahydrofolate (THF) serving as the one-carbon carrier. This reaction serves as the major source of one-carbon groups required for the biosynthesis of purines, thymidylate, methionine, and other important biomolecules. Also exhibits THF-independent aldolase activity toward beta-hydroxyamino acids, producing glycine and aldehydes, via a retro-aldol mechanism. The sequence is that of Serine hydroxymethyltransferase from Rhizobium etli (strain ATCC 51251 / DSM 11541 / JCM 21823 / NBRC 15573 / CFN 42).